A 53-amino-acid polypeptide reads, in one-letter code: UPF0391 membrane protein ECA0470 (53 aa).

A run of 2 helical transmembrane segments spans residues tryptophan 4–alanine 24 and alanine 30–phenylalanine 47.

It belongs to the UPF0391 family.

The protein resides in the cell membrane. This Pectobacterium atrosepticum (strain SCRI 1043 / ATCC BAA-672) (Erwinia carotovora subsp. atroseptica) protein is UPF0391 membrane protein ECA0470.